The chain runs to 174 residues: MSEVETTNDQTPAPKRKDKKPSRSQLRSASRRLALQAVYQWQMNKTAVSEIETQFVIDQDRDMDSCDKVYFRELLQGVTASAKKLDTLFEELLDRPLSELDPIELAVMRIGSYELSQRLDVPYRVAINESVELAKGFGATESHKYVNGILDKLAQRVRREEIAARREANKESNK.

Polar residues predominate over residues 1-11 (MSEVETTNDQT). Positions 1-29 (MSEVETTNDQTPAPKRKDKKPSRSQLRSA) are disordered.

This sequence belongs to the NusB family.

In terms of biological role, involved in transcription antitermination. Required for transcription of ribosomal RNA (rRNA) genes. Binds specifically to the boxA antiterminator sequence of the ribosomal RNA (rrn) operons. This is Transcription antitermination protein NusB from Marinomonas sp. (strain MWYL1).